Here is a 285-residue protein sequence, read N- to C-terminus: ATP synthase gamma chain (285 aa).

The protein belongs to the ATPase gamma chain family. In terms of assembly, F-type ATPases have 2 components, CF(1) - the catalytic core - and CF(0) - the membrane proton channel. CF(1) has five subunits: alpha(3), beta(3), gamma(1), delta(1), epsilon(1). CF(0) has three main subunits: a, b and c.

It localises to the cell membrane. In terms of biological role, produces ATP from ADP in the presence of a proton gradient across the membrane. The gamma chain is believed to be important in regulating ATPase activity and the flow of protons through the CF(0) complex. In Dehalococcoides mccartyi (strain ATCC BAA-2100 / JCM 16839 / KCTC 5957 / BAV1), this protein is ATP synthase gamma chain.